The sequence spans 227 residues: Cytochrome c oxidase subunit 2 (227 aa).

At 1–14 (MAYPLQLGFQDATS) the chain is on the mitochondrial intermembrane side. The helical transmembrane segment at 15 to 45 (PVMEELLHFHDHTLMIIFLISSLVLYIIMLM) threads the bilayer. The Mitochondrial matrix portion of the chain corresponds to 46 to 59 (LTTKLIHTNMMNVQ). Residues 60–87 (EMEMIWTILPAIILILIALPSLHTLYMM) form a helical membrane-spanning segment. Residues 88-227 (DEINNPLLTI…YFESWSASLA (140 aa)) are Mitochondrial intermembrane-facing. Residues His161, Cys196, Glu198, Cys200, His204, and Met207 each coordinate Cu cation. Glu198 is a Mg(2+) binding site. Residue Tyr218 is modified to Phosphotyrosine.

It belongs to the cytochrome c oxidase subunit 2 family. In terms of assembly, component of the cytochrome c oxidase (complex IV, CIV), a multisubunit enzyme composed of 14 subunits. The complex is composed of a catalytic core of 3 subunits MT-CO1, MT-CO2 and MT-CO3, encoded in the mitochondrial DNA, and 11 supernumerary subunits COX4I, COX5A, COX5B, COX6A, COX6B, COX6C, COX7A, COX7B, COX7C, COX8 and NDUFA4, which are encoded in the nuclear genome. The complex exists as a monomer or a dimer and forms supercomplexes (SCs) in the inner mitochondrial membrane with NADH-ubiquinone oxidoreductase (complex I, CI) and ubiquinol-cytochrome c oxidoreductase (cytochrome b-c1 complex, complex III, CIII), resulting in different assemblies (supercomplex SCI(1)III(2)IV(1) and megacomplex MCI(2)III(2)IV(2)). Found in a complex with TMEM177, COA6, COX18, COX20, SCO1 and SCO2. Interacts with TMEM177 in a COX20-dependent manner. Interacts with COX20. Interacts with COX16. Cu cation is required as a cofactor.

It is found in the mitochondrion inner membrane. The catalysed reaction is 4 Fe(II)-[cytochrome c] + O2 + 8 H(+)(in) = 4 Fe(III)-[cytochrome c] + 2 H2O + 4 H(+)(out). In terms of biological role, component of the cytochrome c oxidase, the last enzyme in the mitochondrial electron transport chain which drives oxidative phosphorylation. The respiratory chain contains 3 multisubunit complexes succinate dehydrogenase (complex II, CII), ubiquinol-cytochrome c oxidoreductase (cytochrome b-c1 complex, complex III, CIII) and cytochrome c oxidase (complex IV, CIV), that cooperate to transfer electrons derived from NADH and succinate to molecular oxygen, creating an electrochemical gradient over the inner membrane that drives transmembrane transport and the ATP synthase. Cytochrome c oxidase is the component of the respiratory chain that catalyzes the reduction of oxygen to water. Electrons originating from reduced cytochrome c in the intermembrane space (IMS) are transferred via the dinuclear copper A center (CU(A)) of subunit 2 and heme A of subunit 1 to the active site in subunit 1, a binuclear center (BNC) formed by heme A3 and copper B (CU(B)). The BNC reduces molecular oxygen to 2 water molecules using 4 electrons from cytochrome c in the IMS and 4 protons from the mitochondrial matrix. This Elephas maximus (Indian elephant) protein is Cytochrome c oxidase subunit 2 (MT-CO2).